A 311-amino-acid polypeptide reads, in one-letter code: Aspartate carbamoyltransferase catalytic subunit (311 aa).

Residues Arg-55 and Thr-56 each contribute to the carbamoyl phosphate site. Residue Lys-85 participates in L-aspartate binding. Residues Arg-106, His-135, and Gln-138 each contribute to the carbamoyl phosphate site. Positions 168 and 230 each coordinate L-aspartate. Carbamoyl phosphate contacts are provided by Leu-268 and Pro-269.

It belongs to the aspartate/ornithine carbamoyltransferase superfamily. ATCase family. As to quaternary structure, heterododecamer (2C3:3R2) of six catalytic PyrB chains organized as two trimers (C3), and six regulatory PyrI chains organized as three dimers (R2).

The enzyme catalyses carbamoyl phosphate + L-aspartate = N-carbamoyl-L-aspartate + phosphate + H(+). It participates in pyrimidine metabolism; UMP biosynthesis via de novo pathway; (S)-dihydroorotate from bicarbonate: step 2/3. Its function is as follows. Catalyzes the condensation of carbamoyl phosphate and aspartate to form carbamoyl aspartate and inorganic phosphate, the committed step in the de novo pyrimidine nucleotide biosynthesis pathway. The polypeptide is Aspartate carbamoyltransferase catalytic subunit (Yersinia pestis).